We begin with the raw amino-acid sequence, 613 residues long: MEEQLYLDAEGPLLPLHTSISLFLMSYCDCKTWKIFLVLPDSKANNLSKNILLPRNLELETICKCDLPPLVRGCRLPAVVEASGAFCRAGLAVVLRHITHKAHIAEPSRNDIIELLGFKKTCLKACAEVSQWTRLCEISIPRAIESFLKKPSATIPTEVLQFEKKLGEPVKVHNDDKIRRQKLQQQMTANTNEAVDAKSNTAKTMPCFDIITNKTSLELGAALSKLTVQGALSRATREPSHIRKAKNSDLPPLEHVFAEGLYFTLTDVVLLPCIHAFLVALSNVAEEKCSELPLIAAWYKRVQQVPGVRFAASMCNITFLDILCENAKPQKMLSTFDSETEEKEIQDSNFVGGPRPTMTKLKELGIEAIFSSHPCPSWAIDWESLPAAASPAEGKMSSERAVRKQQQLNNLLSVVTNIAKPGDTIVDFCSGGGHVGIVLAHKLPSCQVILIENKEESLLRAKERCSELGLINIWFIQANLDYFTGSFTIGVALHACGVATDMVMDHCIKARAAFAISPCCYGFIQNTVKTSFPRSCRFQEALNYKEHMILCRFADQTAVQLPAERRQIGKQCMGLVDLDRAWAAEQNKYKVQVITMEPESCSPKNNMIVGSPI.

The GST C-terminal domain maps to 116 to 312; it reads LGFKKTCLKA…QQVPGVRFAA (197 aa).

This sequence belongs to the GSTCD family.

Its subcellular location is the cytoplasm. The protein is Glutathione S-transferase C-terminal domain-containing protein (gstcd) of Xenopus laevis (African clawed frog).